A 123-amino-acid chain; its full sequence is WAP four-disulfide core domain protein 5 (123 aa).

Positions 1 to 24 (MRIQSLLLLGALLAVGSQPPAAFG) are cleaved as a signal peptide. 2 consecutive WAP domains span residues 27–73 (KGEK…CVPR) and 74–121 (VSVK…RDPV). 8 disulfides stabilise this stretch: Cys-34-Cys-62, Cys-41-Cys-66, Cys-49-Cys-61, Cys-55-Cys-70, Cys-81-Cys-109, Cys-88-Cys-113, Cys-96-Cys-108, and Cys-102-Cys-117.

Its subcellular location is the secreted. Putative acid-stable proteinase inhibitor. The chain is WAP four-disulfide core domain protein 5 (WFDC5) from Aotus nancymaae (Ma's night monkey).